The following is a 156-amino-acid chain: ATP synthase subunit b (156 aa).

A helical membrane pass occupies residues 7-27 (LVAQMVVFFILWWVVAKFIWP).

Belongs to the ATPase B chain family. In terms of assembly, F-type ATPases have 2 components, F(1) - the catalytic core - and F(0) - the membrane proton channel. F(1) has five subunits: alpha(3), beta(3), gamma(1), delta(1), epsilon(1). F(0) has three main subunits: a(1), b(2) and c(10-14). The alpha and beta chains form an alternating ring which encloses part of the gamma chain. F(1) is attached to F(0) by a central stalk formed by the gamma and epsilon chains, while a peripheral stalk is formed by the delta and b chains.

The protein localises to the cell inner membrane. F(1)F(0) ATP synthase produces ATP from ADP in the presence of a proton or sodium gradient. F-type ATPases consist of two structural domains, F(1) containing the extramembraneous catalytic core and F(0) containing the membrane proton channel, linked together by a central stalk and a peripheral stalk. During catalysis, ATP synthesis in the catalytic domain of F(1) is coupled via a rotary mechanism of the central stalk subunits to proton translocation. Its function is as follows. Component of the F(0) channel, it forms part of the peripheral stalk, linking F(1) to F(0). This Ralstonia pickettii (strain 12J) protein is ATP synthase subunit b.